The chain runs to 70 residues: Small ribosomal subunit protein bS21B (70 aa).

The protein belongs to the bacterial ribosomal protein bS21 family.

The protein is Small ribosomal subunit protein bS21B of Burkholderia thailandensis (strain ATCC 700388 / DSM 13276 / CCUG 48851 / CIP 106301 / E264).